A 153-amino-acid chain; its full sequence is Transcription antitermination protein NusB (153 aa).

It belongs to the NusB family.

In terms of biological role, involved in transcription antitermination. Required for transcription of ribosomal RNA (rRNA) genes. Binds specifically to the boxA antiterminator sequence of the ribosomal RNA (rrn) operons. This chain is Transcription antitermination protein NusB, found in Beutenbergia cavernae (strain ATCC BAA-8 / DSM 12333 / CCUG 43141 / JCM 11478 / NBRC 16432 / NCIMB 13614 / HKI 0122).